A 66-amino-acid polypeptide reads, in one-letter code: Large ribosomal subunit protein bL31 (66 aa).

Residues cysteine 16, cysteine 18, cysteine 36, and cysteine 39 each coordinate Zn(2+).

The protein belongs to the bacterial ribosomal protein bL31 family. Type A subfamily. In terms of assembly, part of the 50S ribosomal subunit. Requires Zn(2+) as cofactor.

Binds the 23S rRNA. In Thermodesulfovibrio yellowstonii (strain ATCC 51303 / DSM 11347 / YP87), this protein is Large ribosomal subunit protein bL31.